We begin with the raw amino-acid sequence, 199 residues long: Mediator of RNA polymerase II transcription subunit 29 (199 aa).

Low complexity predominate over residues Met1–Val17. The interval Met1 to Gln47 is disordered. Position 2 is an N-acetylalanine (Ala2). Residues Ser18 to Gly27 are compositionally biased toward gly residues. Over residues Pro28 to Gln47 the composition is skewed to low complexity.

The protein belongs to the Mediator complex subunit 29 family. Component of the Mediator complex, which is composed of MED1, MED4, MED6, MED7, MED8, MED9, MED10, MED11, MED12, MED13, MED13L, MED14, MED15, MED16, MED17, MED18, MED19, MED20, MED21, MED22, MED23, MED24, MED25, MED26, MED27, MED29, MED30, MED31, CCNC, CDK8 and CDC2L6/CDK11. The MED12, MED13, CCNC and CDK8 subunits form a distinct module termed the CDK8 module. Mediator containing the CDK8 module is less active than Mediator lacking this module in supporting transcriptional activation. Individual preparations of the Mediator complex lacking one or more distinct subunits have been variously termed ARC, CRSP, DRIP, PC2, SMCC and TRAP. Associates with the MED18/MED20 heteromer.

The protein resides in the nucleus. Component of the Mediator complex, a coactivator involved in the regulated transcription of nearly all RNA polymerase II-dependent genes. Mediator functions as a bridge to convey information from gene-specific regulatory proteins to the basal RNA polymerase II transcription machinery. Mediator is recruited to promoters by direct interactions with regulatory proteins and serves as a scaffold for the assembly of a functional preinitiation complex with RNA polymerase II and the general transcription factors. This chain is Mediator of RNA polymerase II transcription subunit 29 (Med29), found in Mus musculus (Mouse).